We begin with the raw amino-acid sequence, 182 residues long: MSSVMMCCCLLLLFGLLSEGREILVGGKSNTWKAPESRDETLNQWSGRTRFKIGDSLLWKYNAENDSVLQVRQTDYERCDRSEPIRGYKDGHTNIELKRSGPFYFISGEEGHCQRGEKLRVVVLSPNHNRSVVDAPAPVNIVLSPNYNRSVAAAPLNAHIMNKGSLNTAWSLLLLLPLGLLV.

Residues 1–20 (MSSVMMCCCLLLLFGLLSEG) form the signal peptide. The region spanning 21–125 (REILVGGKSN…GEKLRVVVLS (105 aa)) is the Phytocyanin domain. An N-linked (GlcNAc...) asparagine glycan is attached at Asn65. Residues Cys79 and Cys113 are joined by a disulfide bond. N-linked (GlcNAc...) asparagine glycosylation is found at Asn129 and Asn148. Asn157 carries the GPI-anchor amidated asparagine lipid modification. Residues 158–182 (AHIMNKGSLNTAWSLLLLLPLGLLV) constitute a propeptide, removed in mature form.

It belongs to the early nodulin-like (ENODL) family. Mostly expressed in flowers, and, to a lower extent, in leaves, but barely in seedlings, stems, seeds and roots.

Its subcellular location is the cell membrane. Its function is as follows. May act as a carbohydrate transporter. The polypeptide is Early nodulin-like protein 10 (Arabidopsis thaliana (Mouse-ear cress)).